A 1201-amino-acid chain; its full sequence is HEAT repeat-containing protein 6 (1201 aa).

The interval 1 to 25 (MAGKVTFLGSNSSFSPDGKTQGFKS) is disordered. Residues 182–221 (PDLLGPSGVLVKYGDPKQPDIELRRSAVHCIANLCLSVPS) form an HEAT 1 repeat. The segment at 321-390 (AVKPEPAQDT…SQSSMLTSPS (70 aa)) is disordered. Over residues 341–352 (QKKRKSRGKGKK) the composition is skewed to basic residues. Residues 375–390 (SGWSHGSQSSMLTSPS) are compositionally biased toward polar residues. HEAT repeat units follow at residues 460 to 498 (GIGG…GSRQ), 523 to 560 (SIRE…NVPY), and 566 to 603 (GLLS…TQAP). Over residues 618 to 633 (SSLGSGISTPQESPLS) the composition is skewed to polar residues. A disordered region spans residues 618-653 (SSLGSGISTPQESPLSWRQPARRDEEASSPAAAEGP).

The sequence is that of HEAT repeat-containing protein 6 (heatr6) from Danio rerio (Zebrafish).